We begin with the raw amino-acid sequence, 231 residues long: Putative N-acetylmannosamine-6-phosphate 2-epimerase (231 aa).

The protein belongs to the NanE family.

It catalyses the reaction an N-acyl-D-glucosamine 6-phosphate = an N-acyl-D-mannosamine 6-phosphate. Its pathway is amino-sugar metabolism; N-acetylneuraminate degradation; D-fructose 6-phosphate from N-acetylneuraminate: step 3/5. Its function is as follows. Converts N-acetylmannosamine-6-phosphate (ManNAc-6-P) to N-acetylglucosamine-6-phosphate (GlcNAc-6-P). The chain is Putative N-acetylmannosamine-6-phosphate 2-epimerase from Latilactobacillus sakei subsp. sakei (strain 23K) (Lactobacillus sakei subsp. sakei).